The chain runs to 366 residues: Inhibin alpha chain (366 aa).

Positions 1 to 18 (MVLHLLLFLLLTPQGGHS) are cleaved as a signal peptide. Residues 19 to 61 (CQGLELARELVLAKVRALFLDALGPPAVTREGGDPGVRRLPRR) constitute a propeptide that is removed on maturation. Positions 62–232 (HALGGFTHRG…PPSGGERARR (171 aa)) are cleaved as a propeptide — inhibin alpha N-terminal region. 2 N-linked (GlcNAc...) asparagine glycosylation sites follow: N146 and N268. Disulfide bonds link C262-C328, C291-C363, and C295-C365. N-linked (GlcNAc...) asparagine; partial glycosylation occurs at N302.

The protein belongs to the TGF-beta family. Dimeric, linked by one or more disulfide bonds. Activin B is a dimer of alpha and beta-B. Inhibin A is a dimer of alpha and beta-A. Inhibin B is a dimer of alpha and beta-B. Interacts with TGFBR3L; this interaction regulates female fertility. Post-translationally, proteolytic processing yields a number of bioactive forms. The 20/23 kDa forms consist solely of the mature alpha chain, the 26/29 kDa forms consist of the most N-terminal propeptide linked through a disulfide bond to the mature alpha chain, the 50/53 kDa forms encompass the entire proprotein. Each type can be furthermore either mono- or diglycosylated, causing the mass difference. Originally found in ovary (granulosa cells) and testis (Sertoli cells), but widely distributed in many tissues including brain and placenta. In adrenal cortex expression is limited to the zona reticularis and the innermost zona fasciculata in the normal gland, extending centripetally into the zona fasciculata in hyperplasia. Also found in adrenocortical tumors. Also expressed in prostate epithelium of benign prostatic hyperplasia, in regions of basal cell hyperplasia and in nonmalignant regions of high grade prostate cancer. Only circulating inhibin B is found in male, whereas circulating inhibins A and B are found in female.

The protein resides in the secreted. Functionally, inhibins and activins inhibit and activate, respectively, the secretion of follitropin by the pituitary gland. Inhibins/activins are involved in regulating a number of diverse functions such as hypothalamic and pituitary hormone secretion, gonadal hormone secretion, germ cell development and maturation, erythroid differentiation, insulin secretion, nerve cell survival, embryonic axial development or bone growth, depending on their subunit composition. Inhibins appear to oppose the functions of activins. Inhibin A is a dimer of alpha/INHA and beta-A/INHBA that functions as a feedback regulator in the hypothalamic-pituitary-gonadal (HPG) axis. Inhibits the secretion of FSH from the anterior pituitary gland by acting on pituitary gonadotrope cells. Antagonizes activin A by binding to the proteoglycan, betaglycan, and forming a stable complex with and, thereby, sequestering type II activin receptors while excluding type I receptor. Its function is as follows. Inhibin B is a dimer of alpha and beta-B that plays a crucial role in the regulation of the reproductive system by inhibiting the secretion of follicle-stimulating hormone (FSH) from the anterior pituitary gland. Thereby, maintains reproductive homeostasis in both males and females. Acts as a more potent suppressor of FSH release than inhibin A. Functions as competitive receptor antagonist binding activin type II receptors with high affinity in the presence of the TGF-beta type III coreceptor/TGFBR3L. The chain is Inhibin alpha chain (INHA) from Homo sapiens (Human).